Here is a 301-residue protein sequence, read N- to C-terminus: NAD kinase (301 aa).

The Proton acceptor role is filled by D73. Residues 73-74, 151-152, R179, D181, 192-197, A216, and Q250 contribute to the NAD(+) site; these read DG, ND, and TAYALS.

Belongs to the NAD kinase family. A divalent metal cation serves as cofactor.

It localises to the cytoplasm. The catalysed reaction is NAD(+) + ATP = ADP + NADP(+) + H(+). In terms of biological role, involved in the regulation of the intracellular balance of NAD and NADP, and is a key enzyme in the biosynthesis of NADP. Catalyzes specifically the phosphorylation on 2'-hydroxyl of the adenosine moiety of NAD to yield NADP. This Methylibium petroleiphilum (strain ATCC BAA-1232 / LMG 22953 / PM1) protein is NAD kinase.